Here is a 342-residue protein sequence, read N- to C-terminus: Isopentenyl-diphosphate delta-isomerase (342 aa).

11-12 (RK) lines the substrate pocket. FMN contacts are provided by residues Ser-68, 69-71 (SMT), Ser-99, and Asn-127. Residue 99–101 (SMR) coordinates substrate. Gln-162 is a binding site for substrate. Glu-163 is a Mg(2+) binding site. FMN contacts are provided by residues Lys-194, Thr-224, 274-276 (GLK), and 295-296 (AG).

Belongs to the IPP isomerase type 2 family. Homooctamer. Dimer of tetramers. Requires FMN as cofactor. It depends on NADPH as a cofactor. Mg(2+) is required as a cofactor.

The protein resides in the cytoplasm. The catalysed reaction is isopentenyl diphosphate = dimethylallyl diphosphate. In terms of biological role, involved in the biosynthesis of isoprenoids. Catalyzes the 1,3-allylic rearrangement of the homoallylic substrate isopentenyl (IPP) to its allylic isomer, dimethylallyl diphosphate (DMAPP). The chain is Isopentenyl-diphosphate delta-isomerase from Rickettsia canadensis (strain McKiel).